A 440-amino-acid chain; its full sequence is Chromosome partition protein MukF (440 aa).

The leucine-zipper stretch occupies residues 208-236; that stretch reads LSETSGTLRELQDTLEAAGDKLQANLLRI.

Belongs to the MukF family. As to quaternary structure, interacts, and probably forms a ternary complex, with MukE and MukB via its C-terminal region. The complex formation is stimulated by calcium or magnesium. It is required for an interaction between MukE and MukB.

It is found in the cytoplasm. The protein resides in the nucleoid. Functionally, involved in chromosome condensation, segregation and cell cycle progression. May participate in facilitating chromosome segregation by condensation DNA from both sides of a centrally located replisome during cell division. Not required for mini-F plasmid partitioning. Probably acts via its interaction with MukB and MukE. Overexpression results in anucleate cells. It has a calcium binding activity. This chain is Chromosome partition protein MukF, found in Shigella boydii serotype 18 (strain CDC 3083-94 / BS512).